We begin with the raw amino-acid sequence, 391 residues long: Pyruvate dehydrogenase E1 component subunit alpha type II, mitochondrial (391 aa).

The transit peptide at 1-17 (SNIFKGPTVGSSVVAMS) directs the protein to the mitochondrion. The pyruvate site is built by His-83, Tyr-109, Arg-110, Gly-148, Gly-156, Val-158, Asp-187, Gly-188, Ala-189, Asn-216, and Tyr-218. Residues Tyr-109 and Arg-110 each contribute to the thiamine diphosphate site. Residues Gly-156, Val-158, Asp-187, Gly-188, Ala-189, and Asn-216 each coordinate thiamine diphosphate. Residue Asp-187 coordinates Mg(2+). Mg(2+) is bound by residues Asn-216 and Tyr-218. His-283 serves as a coordination point for thiamine diphosphate. Residues Ser-284 and Ser-291 each carry the phosphoserine modification.

In terms of assembly, heterotetramer of two PDHA2 and two PDHB subunits. The heterotetramer interacts with DLAT, and is part of the multimeric pyruvate dehydrogenase complex that contains multiple copies of pyruvate dehydrogenase (E1), dihydrolipoamide acetyltransferase (DLAT, E2) and lipoamide dehydrogenase (DLD, E3). It depends on thiamine diphosphate as a cofactor. Mg(2+) is required as a cofactor.

The protein resides in the mitochondrion matrix. It carries out the reaction N(6)-[(R)-lipoyl]-L-lysyl-[protein] + pyruvate + H(+) = N(6)-[(R)-S(8)-acetyldihydrolipoyl]-L-lysyl-[protein] + CO2. With respect to regulation, pyruvate dehydrogenase activity is inhibited by phosphorylation of PDHA2; it is reactivated by dephosphorylation. The pyruvate dehydrogenase complex catalyzes the overall conversion of pyruvate to acetyl-CoA and CO(2), and thereby links the glycolytic pathway to the tricarboxylic cycle. This is Pyruvate dehydrogenase E1 component subunit alpha type II, mitochondrial from Ascaris suum (Pig roundworm).